Consider the following 154-residue polypeptide: Ribonuclease 8 (154 aa).

The N-terminal stretch at 1–27 is a signal peptide; the sequence is MAPARAGCCPLLLLLLGLRVAQIPVSA. Residue H42 is the Proton acceptor of the active site. Disulfide bonds link C64-C118, C82-C133, and C89-C96. Substrate-binding positions include 65–69 and K90; that span reads KDLNT. The active-site Proton donor is the H149.

The protein belongs to the pancreatic ribonuclease family.

The protein resides in the secreted. Has a low ribonuclease activity. The sequence is that of Ribonuclease 8 (RNASE8) from Miopithecus talapoin (Angolan talapoin).